The following is a 328-amino-acid chain: Ribosomal protein L11 methyltransferase (328 aa).

The S-adenosyl-L-methionine site is built by Thr-153, Gly-174, Asp-196, and Asn-263.

Belongs to the methyltransferase superfamily. PrmA family.

Its subcellular location is the cytoplasm. The catalysed reaction is L-lysyl-[protein] + 3 S-adenosyl-L-methionine = N(6),N(6),N(6)-trimethyl-L-lysyl-[protein] + 3 S-adenosyl-L-homocysteine + 3 H(+). Methylates ribosomal protein L11. The polypeptide is Ribosomal protein L11 methyltransferase (Chloroflexus aurantiacus (strain ATCC 29366 / DSM 635 / J-10-fl)).